Reading from the N-terminus, the 207-residue chain is Urease accessory protein UreE (207 aa).

A compositionally biased stretch (basic and acidic residues) spans 170–194 (EHHGHSHSHSHDHDHDHDHDHDHQH). The interval 170 to 207 (EHHGHSHSHSHDHDHDHDHDHDHQHGPCCSHGHHHGHR) is disordered.

It belongs to the UreE family.

The protein localises to the cytoplasm. Functionally, involved in urease metallocenter assembly. Binds nickel. Probably functions as a nickel donor during metallocenter assembly. This is Urease accessory protein UreE from Burkholderia pseudomallei (strain 1106a).